A 187-amino-acid polypeptide reads, in one-letter code: Flavin-dependent monooxygenase, reductase subunit HsaB (187 aa).

FAD is bound by residues proline 32–alanine 36, glutamine 38–serine 39, cysteine 53–threonine 55, arginine 59–serine 60, and arginine 85–phenylalanine 86. NAD(+) is bound at residue phenylalanine 152–glycine 155.

It belongs to the non-flavoprotein flavin reductase family. In terms of assembly, hsaAB monooxygenase consists of an oxygenase component HsaA and a reductase component HsaB.

The enzyme catalyses a reduced flavin + NAD(+) = an oxidized flavin + NADH + 2 H(+). Its pathway is lipid metabolism; steroid biosynthesis. Catalyzes the reduction of free flavins (FMN or FAD) by NADH. Subsequently, the reduced flavins diffuse to the HsaA oxygenase subunit. This Mycobacterium tuberculosis (strain CDC 1551 / Oshkosh) protein is Flavin-dependent monooxygenase, reductase subunit HsaB (hsaB).